The following is a 702-amino-acid chain: Elongation factor G (702 aa).

The tr-type G domain maps to 8 to 290; sequence ERYRNIGISA…AVIDYLPSPV (283 aa). GTP contacts are provided by residues 17–24, 88–92, and 142–145; these read AHIDAGKT, DTPGH, and NKMD.

This sequence belongs to the TRAFAC class translation factor GTPase superfamily. Classic translation factor GTPase family. EF-G/EF-2 subfamily.

It localises to the cytoplasm. Its function is as follows. Catalyzes the GTP-dependent ribosomal translocation step during translation elongation. During this step, the ribosome changes from the pre-translocational (PRE) to the post-translocational (POST) state as the newly formed A-site-bound peptidyl-tRNA and P-site-bound deacylated tRNA move to the P and E sites, respectively. Catalyzes the coordinated movement of the two tRNA molecules, the mRNA and conformational changes in the ribosome. This Acidovorax ebreus (strain TPSY) (Diaphorobacter sp. (strain TPSY)) protein is Elongation factor G.